The primary structure comprises 164 residues: ATP synthase subunit b (164 aa).

A helical transmembrane segment spans residues 10 to 32; that stretch reads AVAFVLFFVLFGKKLWTPLAAAL.

This sequence belongs to the ATPase B chain family. F-type ATPases have 2 components, F(1) - the catalytic core - and F(0) - the membrane proton channel. F(1) has five subunits: alpha(3), beta(3), gamma(1), delta(1), epsilon(1). F(0) has three main subunits: a(1), b(2) and c(10-14). The alpha and beta chains form an alternating ring which encloses part of the gamma chain. F(1) is attached to F(0) by a central stalk formed by the gamma and epsilon chains, while a peripheral stalk is formed by the delta and b chains.

It localises to the cell inner membrane. Functionally, f(1)F(0) ATP synthase produces ATP from ADP in the presence of a proton or sodium gradient. F-type ATPases consist of two structural domains, F(1) containing the extramembraneous catalytic core and F(0) containing the membrane proton channel, linked together by a central stalk and a peripheral stalk. During catalysis, ATP synthesis in the catalytic domain of F(1) is coupled via a rotary mechanism of the central stalk subunits to proton translocation. Its function is as follows. Component of the F(0) channel, it forms part of the peripheral stalk, linking F(1) to F(0). The sequence is that of ATP synthase subunit b from Gluconacetobacter diazotrophicus (strain ATCC 49037 / DSM 5601 / CCUG 37298 / CIP 103539 / LMG 7603 / PAl5).